The chain runs to 66 residues: Phylloseptin-S1 (66 aa).

The first 22 residues, 1–22 (MAFLKKSLFLVLFLGLVSLSIC), serve as a signal peptide directing secretion. Positions 23–46 (EEEKRETEEEEHDQEEDDKSEEKR) are excised as a propeptide. Residues 25–44 (EKRETEEEEHDQEEDDKSEE) form a disordered region. A compositionally biased stretch (acidic residues) spans 30–41 (EEEEHDQEEDDK). Phe-65 carries the phenylalanine amide modification.

As to expression, expressed by the skin glands.

The protein resides in the secreted. The protein localises to the target cell membrane. Functionally, antimicrobial peptide with high activity against Gram-positive bacteria, low activity against Gram-negative bacteria, and moderate activity against fungi. Acts on bacterial biofilms (S.aureus) with the same potency than on bacteria. Acts by causing bacterial membrane disruption inducing leakage of the intracellular content followed by cell death. It adopts an alpha-helical amphipathic structure in membrane environments. Also shows highly potent antiparasitic activity against Leishmania species. Shows low hemolytic activity on horse and human erythrocytes (LC(50)=39 uM). Is also active on human monocytes (IC(50)=23 uM). In Phyllomedusa sauvagei (Sauvage's leaf frog), this protein is Phylloseptin-S1.